Reading from the N-terminus, the 379-residue chain is Probable G-protein coupled receptor 27 (379 aa).

The Extracellular segment spans residues 1–26; it reads MANASEPGGGGSGGGAEAAALGLRLA. N3 carries an N-linked (GlcNAc...) asparagine glycan. Residues 27–47 traverse the membrane as a helical segment; the sequence is TLSLLLCVSLAGNVLFALLIV. Residues 48–58 are Cytoplasmic-facing; sequence RERSLHRAPYY. A helical membrane pass occupies residues 59-79; sequence LLLDLCLADGLRALACLPAVM. Topologically, residues 80 to 100 are extracellular; it reads LAARRAAAAAGTPPGALGCKL. A disulfide bridge connects residues C98 and C175. Residues 101–121 traverse the membrane as a helical segment; the sequence is LAFLAALFCFHAAFLLLGVGV. Residues 122-142 are Cytoplasmic-facing; the sequence is TRYLAIAHHRFYAERLAGWPC. A helical transmembrane segment spans residues 143-163; the sequence is AAMLVCAAWALALAAAFPPVL. The Extracellular segment spans residues 164 to 185; it reads DGGGADDEDAPCALEQRPDGAP. Residues 186–206 traverse the membrane as a helical segment; the sequence is GALGFLLLLAAVVGATHLVYL. Topologically, residues 207–289 are cytoplasmic; sequence RLLFFIHDRR…FKTEKRLCKM (83 aa). A helical membrane pass occupies residues 290 to 310; that stretch reads FYAITLLFLLLWGPYVVASYL. The Extracellular portion of the chain corresponds to 311 to 324; the sequence is RVLVRPGAVPQAYL. A helical membrane pass occupies residues 325–345; the sequence is TASVWLTFAQAGINPVVCFLF. Topologically, residues 346 to 379 are cytoplasmic; sequence NRELRDCFRAQFPCCQSPQATQATLPCDLKGIGL.

It belongs to the G-protein coupled receptor 1 family.

The protein resides in the cell membrane. Its function is as follows. Orphan receptor. Possible candidate for amine-like G-protein coupled receptor. This is Probable G-protein coupled receptor 27 (Gpr27) from Mus musculus (Mouse).